Here is a 291-residue protein sequence, read N- to C-terminus: Kynurenine formamidase (291 aa).

The short motif at 33 to 37 (HGGAW) is the HGGXW element. Residue serine 107 is the Nucleophile of the active site. Residues aspartate 242 and histidine 280 contribute to the active site.

The protein belongs to the kynurenine formamidase family. As to quaternary structure, homodimer.

The catalysed reaction is N-formyl-L-kynurenine + H2O = L-kynurenine + formate + H(+). It participates in amino-acid degradation; L-tryptophan degradation via kynurenine pathway; L-kynurenine from L-tryptophan: step 2/2. Functionally, catalyzes the hydrolysis of N-formyl-L-kynurenine to L-kynurenine, the second step in the kynurenine pathway of tryptophan degradation. Kynurenine may be further oxidized to nicotinic acid, NAD(H) and NADP(H). Required for elimination of toxic metabolites. This chain is Kynurenine formamidase, found in Debaryomyces hansenii (strain ATCC 36239 / CBS 767 / BCRC 21394 / JCM 1990 / NBRC 0083 / IGC 2968) (Yeast).